The following is a 631-amino-acid chain: Chaperone protein DnaK (631 aa).

Residue threonine 198 is modified to Phosphothreonine; by autocatalysis. Residues 598-631 (YSAQQGGEQPGAAKKDDVVDAEFTEVDDDKKKSA) are disordered.

The protein belongs to the heat shock protein 70 family.

Functionally, acts as a chaperone. In Azorhizobium caulinodans (strain ATCC 43989 / DSM 5975 / JCM 20966 / LMG 6465 / NBRC 14845 / NCIMB 13405 / ORS 571), this protein is Chaperone protein DnaK.